Reading from the N-terminus, the 320-residue chain is Transmembrane protein 41 homolog (320 aa).

The tract at residues glycine 20–alanine 72 is disordered. Residues proline 43 to glutamine 68 show a composition bias toward low complexity. A run of 6 helical transmembrane segments spans residues valine 83–phenylalanine 103, valine 141–leucine 161, phenylalanine 173–serine 195, leucine 225–phenylalanine 242, leucine 245–valine 265, and phenylalanine 289–leucine 309.

It belongs to the TMEM41 family. As to expression, in embryos, strongly expressed in the nervous system.

It is found in the membrane. Required in cholinergic neurons, but not in motor neurons, for normal neurotransmitter release by motor neurons. Involved in muscle growth. The polypeptide is Transmembrane protein 41 homolog (stas) (Drosophila melanogaster (Fruit fly)).